The chain runs to 212 residues: Transcriptional repressor CcpN (212 aa).

Positions 6–70 constitute an HTH deoR-type domain; sequence LNKRQEHILQ…FYTGKTGTQL (65 aa). Positions 23–42 form a DNA-binding region, H-T-H motif; that stretch reads ITGEHIAEKLNLTRATLRPD. 2 consecutive CBS domains span residues 83–139 and 148–211; these read FQSI…QQEL and MTRM…ENEI.

In terms of biological role, transcription repressor that binds to the promoter of gapB and pckA genes, preventing their expression. Acts as a regulator for catabolite repression of gluconeogenic genes. The protein is Transcriptional repressor CcpN (ccpN) of Bacillus subtilis (strain 168).